A 288-amino-acid chain; its full sequence is Glycine--tRNA ligase alpha subunit (288 aa).

This sequence belongs to the class-II aminoacyl-tRNA synthetase family. As to quaternary structure, tetramer of two alpha and two beta subunits.

It localises to the cytoplasm. The catalysed reaction is tRNA(Gly) + glycine + ATP = glycyl-tRNA(Gly) + AMP + diphosphate. The sequence is that of Glycine--tRNA ligase alpha subunit from Rickettsia massiliae (strain Mtu5).